The chain runs to 774 residues: Lon protease 1 (774 aa).

Residues 9–202 form the Lon N-terminal domain; that stretch reads IPLLPLRGLL…KVIDFINNEK (194 aa). 354–361 contributes to the ATP binding site; sequence GPPGVGKT. The Lon proteolytic domain maps to 590–771; it reads EDQVGVVTGL…DEVLEHALVG (182 aa). Active-site residues include Ser677 and Lys720.

It belongs to the peptidase S16 family. Homohexamer. Organized in a ring with a central cavity. Exists as a mixture of small oligomeric species in solution.

It is found in the cytoplasm. It carries out the reaction Hydrolysis of proteins in presence of ATP.. Functionally, ATP-dependent serine protease that mediates the selective degradation of mutant and abnormal proteins as well as certain short-lived regulatory proteins. Required for cellular homeostasis and for survival from DNA damage and developmental changes induced by stress. Degrades polypeptides processively to yield small peptide fragments that are 5 to 10 amino acids long. Binds to DNA in a double-stranded, site-specific manner. Has been implicated in preventing sigma(G) activity under non-sporulation conditions. This chain is Lon protease 1, found in Bacillus subtilis (strain 168).